Reading from the N-terminus, the 379-residue chain is Galactose-1-phosphate uridylyltransferase (379 aa).

Residues 1–15 show a composition bias toward polar residues; sequence MSQSGADPEQRQQAS. Positions 1-20 are disordered; sequence MSQSGADPEQRQQASEADAM. Zn(2+) is bound at residue C75. Residues A81, 97–98, and N173 contribute to the UDP-alpha-D-glucose site; that span reads ND. H184 contributes to the Zn(2+) binding site. H186 functions as the Tele-UMP-histidine intermediate in the catalytic mechanism. Q188 is a UDP-alpha-D-glucose binding site. 4 residues coordinate Zn(2+): E202, H301, H319, and H321. Residues 334–337 and 339–340 contribute to the UDP-alpha-D-glucose site; these read KFMV and YE.

This sequence belongs to the galactose-1-phosphate uridylyltransferase type 1 family. Homodimer. It depends on Zn(2+) as a cofactor.

The catalysed reaction is alpha-D-galactose 1-phosphate + UDP-alpha-D-glucose = alpha-D-glucose 1-phosphate + UDP-alpha-D-galactose. It functions in the pathway carbohydrate metabolism; galactose metabolism. Plays an important role in galactose metabolism. This Rattus norvegicus (Rat) protein is Galactose-1-phosphate uridylyltransferase (Galt).